A 270-amino-acid chain; its full sequence is Energy-coupling factor transporter ATP-binding protein EcfA (270 aa).

An ABC transporter domain is found at 5–238 (VEIENLTFFY…QLLEQNGLKA (234 aa)). An ATP-binding site is contributed by 38–45 (GHNGAGKS).

This sequence belongs to the ABC transporter superfamily. Energy-coupling factor EcfA family. In terms of assembly, forms a stable energy-coupling factor (ECF) transporter complex composed of 2 membrane-embedded substrate-binding proteins (S component), 2 ATP-binding proteins (A component) and 2 transmembrane proteins (T component).

The protein localises to the cell membrane. Functionally, ATP-binding (A) component of a common energy-coupling factor (ECF) ABC-transporter complex. Unlike classic ABC transporters this ECF transporter provides the energy necessary to transport a number of different substrates. The sequence is that of Energy-coupling factor transporter ATP-binding protein EcfA from Carboxydothermus hydrogenoformans (strain ATCC BAA-161 / DSM 6008 / Z-2901).